The following is a 178-amino-acid chain: Ribulose bisphosphate carboxylase small subunit, chloroplastic 4 (178 aa).

A chloroplast-targeting transit peptide spans 1–54 (MASISSTVATVSRAAPAQANMVAPFTGLKSNAAFPATKKANDFSTLPSNGGRVQ).

The protein belongs to the RuBisCO small chain family. Heterohexadecamer of 8 large and 8 small subunits.

The protein resides in the plastid. The protein localises to the chloroplast. Its function is as follows. RuBisCO catalyzes two reactions: the carboxylation of D-ribulose 1,5-bisphosphate, the primary event in carbon dioxide fixation, as well as the oxidative fragmentation of the pentose substrate. Both reactions occur simultaneously and in competition at the same active site. Although the small subunit is not catalytic it is essential for maximal activity. In Flaveria pringlei, this protein is Ribulose bisphosphate carboxylase small subunit, chloroplastic 4.